A 223-amino-acid chain; its full sequence is MAAQPTIREVLFNPVFQNNPIGLQILGICSALAVTSNLKTATVMAIALTLVTGFSNLFISMIRRQIPSSIRMIVQMVIIASLVIVVDQVLKAYAYSLSKQLSVFVGLIITNCIVMGRAEAFAMANPPLVSFFDGIGNGLGYSAMLLVLGFIRELFGAGKLYGISVLPTVNDGGWYQPNGLLLLPPSAFFLIGLIIWALRTWKKDQVEAPAYRMAPQVSSKEAY.

The next 5 helical transmembrane spans lie at 42 to 62 (TVMAIALTLVTGFSNLFISMI), 66 to 86 (IPSSIRMIVQMVIIASLVIVV), 103 to 123 (VFVGLIITNCIVMGRAEAFAM), 131 to 151 (FFDGIGNGLGYSAMLLVLGFI), and 178 to 198 (NGLLLLPPSAFFLIGLIIWAL).

It belongs to the NqrDE/RnfAE family. In terms of assembly, composed of six subunits; NqrA, NqrB, NqrC, NqrD, NqrE and NqrF.

The protein localises to the cell inner membrane. It catalyses the reaction a ubiquinone + n Na(+)(in) + NADH + H(+) = a ubiquinol + n Na(+)(out) + NAD(+). In terms of biological role, NQR complex catalyzes the reduction of ubiquinone-1 to ubiquinol by two successive reactions, coupled with the transport of Na(+) ions from the cytoplasm to the periplasm. NqrA to NqrE are probably involved in the second step, the conversion of ubisemiquinone to ubiquinol. The chain is Na(+)-translocating NADH-quinone reductase subunit D from Pseudomonas paraeruginosa (strain DSM 24068 / PA7) (Pseudomonas aeruginosa (strain PA7)).